We begin with the raw amino-acid sequence, 247 residues long: tRNA pseudouridine synthase A (247 aa).

Residue aspartate 53 is the Nucleophile of the active site. Residue tyrosine 111 coordinates substrate.

The protein belongs to the tRNA pseudouridine synthase TruA family. Homodimer.

The catalysed reaction is uridine(38/39/40) in tRNA = pseudouridine(38/39/40) in tRNA. In terms of biological role, formation of pseudouridine at positions 38, 39 and 40 in the anticodon stem and loop of transfer RNAs. The polypeptide is tRNA pseudouridine synthase A (Bacillus velezensis (strain DSM 23117 / BGSC 10A6 / LMG 26770 / FZB42) (Bacillus amyloliquefaciens subsp. plantarum)).